Here is a 314-residue protein sequence, read N- to C-terminus: Atrochrysone carboxyl ACP thioesterase AgnL7 (314 aa).

Positions 103, 105, 107, and 108 each coordinate Zn(2+). Residue Asp107 is the Proton donor/acceptor of the active site.

The protein belongs to the metallo-beta-lactamase superfamily. Requires Zn(2+) as cofactor.

The enzyme catalyses atrochrysone carboxyl-[ACP] + H2O = atrochrysone carboxylate + holo-[ACP] + H(+). Its pathway is secondary metabolite biosynthesis. Atrochrysone carboxyl ACP thioesterase; part of the gene cluster that mediates the biosynthesis of agnestins, dihydroxy-xanthone metabolites. The pathway begins with the assembly and cyclization of atrochrysone thioester by the non-reducing polyketide synthase Agnpks1. The atrochrysone carboxyl ACP thioesterase AgnL7 then breaks the thioester bond and releases the atrochrysone carboxylic acid as the first enzyme-free intermediate. The decarboxylase AgnL1 then catalyzes the concerted decarboxylation-elimination required to convert atochrysone carboxylic acid into emodin anthrone, which is further oxidized to emodin by the anthrone oxygenase AgnL2. Emodin then undergoes reduction catalyzed by the oxidoreductase AgnL4 to yield the dihydroquinone tautomer which is the substrate for reduction by the short chain dehydrogenase AgnL6 reduction to produce hydroxyketone, followed by AgnL8 dehydration and likely spontaneous autoxidation to chrysophanol. Baeyer-Villiger oxidation by the oxidase AgnL3 leads to monodictyphenone via cleavage of the C-10/C-10a bond of chrysophanol. Alternative cleavage at the C-4a/C-10 bond of chrysophanol also leads to the formation some cephalone F. Further conversion to agnestins A and B, requires reduction to dihydro-monodictyphenone, oxidation to agnestin C probably via an epoxide, and rearrangement to either agnestin A or agnestin B directly, although agnestin A or agnestin B can also interconvert. Within the cluster, AgnR1 is the only unassigned oxidoreductase present which could be involved in this conversion. However, AgnR1 seems not to be involved in this step, and thus genes involved in the proposed oxidation/reduction may be located elsewhere on the genome. Further agnestin A derivatives are probably formed by spontaneous decarboxylations, dehydrations and methanolysis reactions. The chain is Atrochrysone carboxyl ACP thioesterase AgnL7 from Paecilomyces divaricatus (Penicillium divaricatum).